Consider the following 309-residue polypeptide: Uracil phosphoribosyltransferase homolog (309 aa).

The disordered stretch occupies residues 1–38 (MATELQCPDSMPCHNQQVNSASTPSPEQLRPGDLILDH). Positions 13-26 (CHNQQVNSASTPSP) are enriched in polar residues. Serine 25 carries the phosphoserine modification. Residues arginine 133, arginine 142, and 176-179 (EKGN) contribute to the GTP site. Arginine 186 contacts 5-phospho-alpha-D-ribose 1-diphosphate. Arginine 203 and arginine 232 together coordinate GTP. 238 to 246 (YPILSTGNT) lines the 5-phospho-alpha-D-ribose 1-diphosphate pocket. 299–301 (THF) lines the uracil pocket.

The protein belongs to the UPRTase family. In terms of tissue distribution, highly expressed in leukocytes, liver, spleen and thymus, with lower expression in brain, lung and skeletal muscle.

The protein localises to the cytoplasm. It is found in the nucleus. The protein is Uracil phosphoribosyltransferase homolog (UPRT) of Homo sapiens (Human).